The primary structure comprises 125 residues: Ribonuclease P protein component (125 aa).

This sequence belongs to the RnpA family. In terms of assembly, consists of a catalytic RNA component (M1 or rnpB) and a protein subunit.

The catalysed reaction is Endonucleolytic cleavage of RNA, removing 5'-extranucleotides from tRNA precursor.. In terms of biological role, RNaseP catalyzes the removal of the 5'-leader sequence from pre-tRNA to produce the mature 5'-terminus. It can also cleave other RNA substrates such as 4.5S RNA. The protein component plays an auxiliary but essential role in vivo by binding to the 5'-leader sequence and broadening the substrate specificity of the ribozyme. This chain is Ribonuclease P protein component, found in Oleidesulfovibrio alaskensis (strain ATCC BAA-1058 / DSM 17464 / G20) (Desulfovibrio alaskensis).